A 389-amino-acid polypeptide reads, in one-letter code: Nucleic acid dioxygenase ALKBH1 (389 aa).

The interval 86–389 is tRNA-binding; the sequence is SKWQAYGLKG…VKRARINPDS (304 aa). Substrate is bound by residues tryptophan 144 and 175 to 177; that span reads YHY. The Fe2OG dioxygenase domain occupies 208–347; it reads GFEDFRAEAG…RVNMTVRQVL (140 aa). Position 220–222 (220–222) interacts with 2-oxoglutarate; sequence NYY. Histidine 231, aspartate 233, and histidine 287 together coordinate Fe cation. Aspartate 233 provides a ligand contact to substrate. 338 to 344 contributes to the 2-oxoglutarate binding site; that stretch reads RVNMTVR.

Belongs to the alkB family. In terms of assembly, monomer. Interacts with DNAJB6. It depends on Fe(2+) as a cofactor. In terms of tissue distribution, ubiquitous.

The protein resides in the nucleus. Its subcellular location is the mitochondrion. It catalyses the reaction 2'-deoxyribonucleotide-(2'-deoxyribose 5'-phosphate)-2'-deoxyribonucleotide-DNA = a 3'-end 2'-deoxyribonucleotide-(2,3-dehydro-2,3-deoxyribose 5'-phosphate)-DNA + a 5'-end 5'-phospho-2'-deoxyribonucleoside-DNA + H(+). The enzyme catalyses a methylated nucleobase within DNA + 2-oxoglutarate + O2 = a nucleobase within DNA + formaldehyde + succinate + CO2. The catalysed reaction is an N(6)-methyl-2'-deoxyadenosine in DNA + 2-oxoglutarate + O2 = a 2'-deoxyadenosine in DNA + formaldehyde + succinate + CO2. It carries out the reaction an N(1)-methyladenosine in tRNA + 2-oxoglutarate + O2 = an adenosine in tRNA + formaldehyde + succinate + CO2. It catalyses the reaction 5-methylcytidine(34) in mitochondrial tRNA(Met) + 2 2-oxoglutarate + 2 O2 = 5-formylcytidine(34) in mitochondrial tRNA(Met) + 2 succinate + 2 CO2 + H2O. The enzyme catalyses an N(3)-methylcytidine in mRNA + 2-oxoglutarate + O2 = a cytidine in mRNA + formaldehyde + succinate + CO2. The catalysed reaction is N(1)-methyladenosine(58) in tRNA + 2-oxoglutarate + O2 = adenosine(58) in tRNA + formaldehyde + succinate + CO2. In terms of biological role, dioxygenase that acts on nucleic acids, such as DNA and tRNA. Requires molecular oxygen, alpha-ketoglutarate and iron. A number of activities have been described for this dioxygenase, but recent results suggest that it mainly acts on tRNAs and mediates their demethylation or oxidation depending on the context and subcellular compartment. Mainly acts as a tRNA demethylase by removing N(1)-methyladenine from various tRNAs, with a preference for N(1)-methyladenine at position 58 (m1A58) present on a stem loop structure of tRNAs. Acts as a regulator of translation initiation and elongation in response to glucose deprivation: regulates both translation initiation, by mediating demethylation of tRNA(Met), and translation elongation, N(1)-methyladenine-containing tRNAs being preferentially recruited to polysomes to promote translation elongation. In mitochondrion, specifically interacts with mt-tRNA(Met) and mediates oxidation of mt-tRNA(Met) methylated at cytosine(34) to form 5-formylcytosine (f(5)c) at this position. mt-tRNA(Met) containing the f(5)c modification at the wobble position enables recognition of the AUA codon in addition to the AUG codon, expanding codon recognition in mitochondrial translation. Specifically demethylates DNA methylated on the 6th position of adenine (N(6)-methyladenosine) DNA. N(6)-methyladenosine (m6A) DNA is present at some L1 elements in embryonic stem cells and probably promotes their silencing. Demethylates mRNAs containing N(3)-methylcytidine modification. Also able to repair alkylated single-stranded DNA by oxidative demethylation, but with low activity. Also has DNA lyase activity and introduces double-stranded breaks at abasic sites: cleaves both single-stranded DNA and double-stranded DNA at abasic sites, with the greatest activity towards double-stranded DNA with two abasic sites. DNA lyase activity does not require alpha-ketoglutarate and iron and leads to the formation of an irreversible covalent protein-DNA adduct with the 5' DNA product. DNA lyase activity is not required during base excision repair and class switch recombination of the immunoglobulin heavy chain during B lymphocyte activation. May play a role in placental trophoblast lineage differentiation. This Homo sapiens (Human) protein is Nucleic acid dioxygenase ALKBH1.